Consider the following 435-residue polypeptide: ATP-dependent protease ATPase subunit HslU (435 aa).

Residues isoleucine 18, 60–65, aspartate 248, glutamate 313, and arginine 385 contribute to the ATP site; that span reads GVGKTE.

This sequence belongs to the ClpX chaperone family. HslU subfamily. A double ring-shaped homohexamer of HslV is capped on each side by a ring-shaped HslU homohexamer. The assembly of the HslU/HslV complex is dependent on binding of ATP.

It is found in the cytoplasm. ATPase subunit of a proteasome-like degradation complex; this subunit has chaperone activity. The binding of ATP and its subsequent hydrolysis by HslU are essential for unfolding of protein substrates subsequently hydrolyzed by HslV. HslU recognizes the N-terminal part of its protein substrates and unfolds these before they are guided to HslV for hydrolysis. This is ATP-dependent protease ATPase subunit HslU from Rhizobium leguminosarum bv. trifolii (strain WSM2304).